The sequence spans 319 residues: Beta-ketoacyl-[acyl-carrier-protein] synthase III (319 aa).

Catalysis depends on residues Cys110 and His246. An ACP-binding region spans residues 247-251 (QANYR). Asn276 is a catalytic residue.

Belongs to the thiolase-like superfamily. FabH family. As to quaternary structure, homodimer.

The protein localises to the cytoplasm. It carries out the reaction malonyl-[ACP] + acetyl-CoA + H(+) = 3-oxobutanoyl-[ACP] + CO2 + CoA. The protein operates within lipid metabolism; fatty acid biosynthesis. Its function is as follows. Catalyzes the condensation reaction of fatty acid synthesis by the addition to an acyl acceptor of two carbons from malonyl-ACP. Catalyzes the first condensation reaction which initiates fatty acid synthesis and may therefore play a role in governing the total rate of fatty acid production. Possesses both acetoacetyl-ACP synthase and acetyl transacylase activities. Its substrate specificity determines the biosynthesis of branched-chain and/or straight-chain of fatty acids. This is Beta-ketoacyl-[acyl-carrier-protein] synthase III from Lactobacillus delbrueckii subsp. bulgaricus (strain ATCC 11842 / DSM 20081 / BCRC 10696 / JCM 1002 / NBRC 13953 / NCIMB 11778 / NCTC 12712 / WDCM 00102 / Lb 14).